Consider the following 201-residue polypeptide: High mobility group protein homolog 068R (201 aa).

2 consecutive DNA-binding regions (HMG box) follow at residues 70–138 and 143–201; these read PKRN…ELEK and TPSK…KAAK.

Belongs to the IIV-6 401R family.

The protein resides in the host nucleus. In Invertebrate iridescent virus 3 (IIV-3), this protein is High mobility group protein homolog 068R.